A 255-amino-acid chain; its full sequence is Carboxy-S-adenosyl-L-methionine synthase (255 aa).

S-adenosyl-L-methionine contacts are provided by residues Tyr-45, 70–72, 124–125, and Asn-139; these read GCS and DI.

Belongs to the class I-like SAM-binding methyltransferase superfamily. Cx-SAM synthase family. In terms of assembly, homodimer.

It carries out the reaction prephenate + S-adenosyl-L-methionine = carboxy-S-adenosyl-L-methionine + 3-phenylpyruvate + H2O. In terms of biological role, catalyzes the conversion of S-adenosyl-L-methionine (SAM) to carboxy-S-adenosyl-L-methionine (Cx-SAM). The sequence is that of Carboxy-S-adenosyl-L-methionine synthase from Hamiltonella defensa subsp. Acyrthosiphon pisum (strain 5AT).